The following is a 448-amino-acid chain: Fiber protein (448 aa).

This sequence belongs to the adenoviridae fiber family. As to quaternary structure, homotrimer. Interacts (via N-terminal tail region) with pentons.

Its subcellular location is the virion. It localises to the host nucleus. In terms of biological role, forms spikes that protrude from each vertex of the icosahedral capsid. Interacts with host receptor to provide virion initial attachment to target cell. Fiber proteins are shed during virus entry, when virus is still at the cell surface. The chain is Fiber protein from Sus scrofa (Pig).